Reading from the N-terminus, the 397-residue chain is L-asparaginase-like protein GM15681 (397 aa).

A signal peptide spans 1–22 (MLAQSCCLRLLILLLLFTSICS). Cystine bridges form between Cys-90/Cys-95, Cys-189/Cys-205, and Cys-344/Cys-371.

Belongs to the Ntn-hydrolase family.

This is L-asparaginase-like protein GM15681 from Drosophila sechellia (Fruit fly).